A 503-amino-acid polypeptide reads, in one-letter code: Cytochrome P450 3A17 (503 aa).

Cys-442 is a binding site for heme.

This sequence belongs to the cytochrome P450 family. The cofactor is heme.

The protein resides in the endoplasmic reticulum membrane. It is found in the microsome membrane. It catalyses the reaction an organic molecule + reduced [NADPH--hemoprotein reductase] + O2 = an alcohol + oxidized [NADPH--hemoprotein reductase] + H2O + H(+). Functionally, cytochromes P450 are a group of heme-thiolate monooxygenases. In liver microsomes, this enzyme is involved in an NADPH-dependent electron transport pathway. It oxidizes a variety of structurally unrelated compounds, including steroids, fatty acids, and xenobiotics. This Cavia porcellus (Guinea pig) protein is Cytochrome P450 3A17 (CYP3A17).